We begin with the raw amino-acid sequence, 418 residues long: ORC1-type DNA replication protein 2 (418 aa).

ATP is bound by residues Thr72–Val76, Tyr218, and Arg230.

Belongs to the CDC6/cdc18 family.

Its function is as follows. Involved in regulation of DNA replication. This is ORC1-type DNA replication protein 2 (cdc6-2) from Sulfurisphaera tokodaii (strain DSM 16993 / JCM 10545 / NBRC 100140 / 7) (Sulfolobus tokodaii).